Here is a 779-residue protein sequence, read N- to C-terminus: Filament-like plant protein 1 (779 aa).

The span at 1 to 14 shows a compositional bias: basic and acidic residues; it reads MEKRKRESSERSFG. 3 disordered regions span residues 1–55, 253–274, and 315–336; these read MEKR…ETEK, ASFN…MDVS, and PETP…VVVP. A coiled-coil region spans residues 47–200; the sequence is VSLEVETEKE…KENVMLRHEL (154 aa). Positions 256–272 are enriched in basic and acidic residues; sequence NDHRSTDSHSDGGERMD. Residues 324–336 show a composition bias toward low complexity; it reads SGPESVTEEVVVP. The stretch at 337–674 forms a coiled coil; it reads SENSLASEIE…ANCQKTIASL (338 aa). Over residues 718–731 the composition is skewed to basic and acidic residues; sequence FMTRNHPESIKPTK. The segment at 718–764 is disordered; sequence FMTRNHPESIKPTKETSPSSSSSTASAAVSMPVSTNRGSSEKNRNGF. Over residues 733-752 the composition is skewed to low complexity; the sequence is TSPSSSSSTASAAVSMPVST.

The protein belongs to the FPP family. Interacts with WPP/MAF proteins.

The sequence is that of Filament-like plant protein 1 (FPP1) from Arabidopsis thaliana (Mouse-ear cress).